A 763-amino-acid chain; its full sequence is C6 finger domain transcription factor hasF (763 aa).

A compositionally biased stretch (low complexity) spans 1–20 (MDSTTSSSRFSVSSPQSGPS). Residues 1-25 (MDSTTSSSRFSVSSPQSGPSAGIQK) are disordered. A DNA-binding region (zn(2)-C6 fungal-type) is located at residues 34 to 61 (CLTCRRRKVKCDHAQPVCTPCQRGGRVC). Disordered stretches follow at residues 68–91 (PVSQAPSRVGTGSRVSRTNLRSGQ), 112–145 (GGNMSILPDAKGTSTGSPSDVDQGGNALPNPKCE), and 189–219 (DQSSGAPADSPPSDQPTPPFPFSGSTVESLT). Positions 80 to 89 (SRVSRTNLRS) are enriched in polar residues. The span at 197-209 (DSPPSDQPTPPFP) shows a compositional bias: pro residues.

The protein localises to the nucleus. In terms of biological role, transcription factor; part of the gene cluster that mediates the biosynthesis of hexadehydro-astechrome (HAS), a tryptophan-derived iron(III)-complex that acts as a virulence factor in infected mice. Does not regulate the expression of the HAS biosynthetic genes (at least under the growth conditions tested). In Aspergillus fumigatus (strain CBS 144.89 / FGSC A1163 / CEA10) (Neosartorya fumigata), this protein is C6 finger domain transcription factor hasF.